Here is a 268-residue protein sequence, read N- to C-terminus: Ribosomal RNA small subunit methyltransferase A (268 aa).

N18, L20, G45, E66, D91, and N112 together coordinate S-adenosyl-L-methionine.

Belongs to the class I-like SAM-binding methyltransferase superfamily. rRNA adenine N(6)-methyltransferase family. RsmA subfamily.

It localises to the cytoplasm. The enzyme catalyses adenosine(1518)/adenosine(1519) in 16S rRNA + 4 S-adenosyl-L-methionine = N(6)-dimethyladenosine(1518)/N(6)-dimethyladenosine(1519) in 16S rRNA + 4 S-adenosyl-L-homocysteine + 4 H(+). Its function is as follows. Specifically dimethylates two adjacent adenosines (A1518 and A1519) in the loop of a conserved hairpin near the 3'-end of 16S rRNA in the 30S particle. May play a critical role in biogenesis of 30S subunits. This chain is Ribosomal RNA small subunit methyltransferase A, found in Shewanella putrefaciens (strain CN-32 / ATCC BAA-453).